A 425-amino-acid chain; its full sequence is Gamma-glutamyl phosphate reductase (425 aa).

This sequence belongs to the gamma-glutamyl phosphate reductase family.

Its subcellular location is the cytoplasm. The enzyme catalyses L-glutamate 5-semialdehyde + phosphate + NADP(+) = L-glutamyl 5-phosphate + NADPH + H(+). Its pathway is amino-acid biosynthesis; L-proline biosynthesis; L-glutamate 5-semialdehyde from L-glutamate: step 2/2. Catalyzes the NADPH-dependent reduction of L-glutamate 5-phosphate into L-glutamate 5-semialdehyde and phosphate. The product spontaneously undergoes cyclization to form 1-pyrroline-5-carboxylate. This Opitutus terrae (strain DSM 11246 / JCM 15787 / PB90-1) protein is Gamma-glutamyl phosphate reductase.